The following is a 633-amino-acid chain: DEAD-box ATP-dependent RNA helicase 27 (633 aa).

Residues 1–17 (MANLDMEQHSSENEEIK) show a composition bias toward basic and acidic residues. The tract at residues 1 to 147 (MANLDMEQHS…DKEEEKKLEE (147 aa)) is disordered. A coiled-coil region spans residues 2–34 (ANLDMEQHSSENEEIKKKKHKKRARDEAKKLKQ). 2 stretches are compositionally biased toward acidic residues: residues 37 to 47 (MEEEPDHEDGD) and 74 to 83 (DDGEDEAVAE). Positions 88–97 (KKKKKNKKLQ) are enriched in basic residues. Acidic residues-rich tracts occupy residues 103–114 (NDEEDEVIAEEE) and 131–140 (SEEEEVEDKE). Residues 117–153 (KKKKKKQRKDTEAKSEEEEVEDKEEEKKLEETSIMTN) adopt a coiled-coil conformation. Positions 154–182 (KTFESLSLSDNTYKSIKEMGFARMTQIQA) match the Q motif motif. Residues 185–360 (IPPLMMGEDV…RVSLTSPVYI (176 aa)) form the Helicase ATP-binding domain. Residue 198–205 (ARTGSGKT) participates in ATP binding. Residues 308–311 (DEAD) carry the DEAD box motif. The Helicase C-terminal domain occupies 386–534 (RLLFLLTFLK…EHEFEEKKLL (149 aa)). The tract at residues 608–633 (KREPVNKFKRGRGGGRPGGKSKFERY) is disordered.

The protein belongs to the DEAD box helicase family. DDX18/HAS1 subfamily.

The catalysed reaction is ATP + H2O = ADP + phosphate + H(+). In Arabidopsis thaliana (Mouse-ear cress), this protein is DEAD-box ATP-dependent RNA helicase 27 (RH27).